The following is a 208-amino-acid chain: GATA transcription factor 20 (208 aa).

The GATA-type zinc-finger motif lies at 94-119; that stretch reads CASCDTTSTPLWRNGPKGPKSLCNAC.

This sequence belongs to the type IV zinc-finger family. Class B subfamily.

The protein localises to the nucleus. Transcriptional regulator that specifically binds 5'-GATA-3' or 5'-GAT-3' motifs within gene promoters. The protein is GATA transcription factor 20 of Arabidopsis thaliana (Mouse-ear cress).